Reading from the N-terminus, the 406-residue chain is Renin (406 aa).

The N-terminal stretch at 1-23 (MDGWRRMPRWGLLLLLWGSCTFG) is a signal peptide. A propeptide spans 24–66 (LPTDTTTFKRIFLKRMPSIRESLKERGVDMARLGPEWSQPMKR) (activation peptide). N-linked (GlcNAc...) asparagine glycosylation occurs at Asn-71. The Peptidase A1 domain occupies 86–403 (YYGEIGIGTP…DRRNNRIGFA (318 aa)). Residue Asp-104 is part of the active site. Cys-117 and Cys-124 are joined by a disulfide. N-linked (GlcNAc...) asparagine glycosylation is present at Asn-141. The cysteines at positions 283 and 287 are disulfide-linked. The active site involves Asp-292. Cys-325 and Cys-362 are disulfide-bonded.

It belongs to the peptidase A1 family. Interacts with ATP6AP2.

Its subcellular location is the secreted. It localises to the membrane. It catalyses the reaction Cleavage of Leu-|-Xaa bond in angiotensinogen to generate angiotensin I.. With respect to regulation, interaction with ATP6AP2 results in a 5-fold increased efficiency in angiotensinogen processing. In terms of biological role, renin is a highly specific endopeptidase, whose only known function is to generate angiotensin I from angiotensinogen in the plasma, initiating a cascade of reactions that produce an elevation of blood pressure and increased sodium retention by the kidney. This Macaca mulatta (Rhesus macaque) protein is Renin (REN).